A 239-amino-acid polypeptide reads, in one-letter code: Methylthioribulose-1-phosphate dehydratase (239 aa).

A substrate-binding site is contributed by Cys-94. The Zn(2+) site is built by His-112 and His-114. Glu-136 (proton donor/acceptor) is an active-site residue. His-192 lines the Zn(2+) pocket.

The protein belongs to the aldolase class II family. MtnB subfamily. Requires Zn(2+) as cofactor.

The protein resides in the cytoplasm. It catalyses the reaction 5-(methylsulfanyl)-D-ribulose 1-phosphate = 5-methylsulfanyl-2,3-dioxopentyl phosphate + H2O. It participates in amino-acid biosynthesis; L-methionine biosynthesis via salvage pathway; L-methionine from S-methyl-5-thio-alpha-D-ribose 1-phosphate: step 2/6. Catalyzes the dehydration of methylthioribulose-1-phosphate (MTRu-1-P) into 2,3-diketo-5-methylthiopentyl-1-phosphate (DK-MTP-1-P). Functions in the methionine salvage pathway. May play a role in apoptosis. This is Methylthioribulose-1-phosphate dehydratase from Xenopus tropicalis (Western clawed frog).